Consider the following 301-residue polypeptide: Heme A synthase (301 aa).

At 1-7 the chain is on the cytoplasmic side; sequence MHKGLKR. A helical membrane pass occupies residues 8-28; the sequence is LGVITSLGVLLVLIQGALVTN. Residues 29–56 lie on the Extracellular side of the membrane; sequence TGSGEGCGQTWPLCFGQVIPLDPPPETV. A disulfide bond links C35 and C42. Residues 57–77 traverse the membrane as a helical segment; it reads IEFSHRLVAGIVGMLVILMAI. E58 is a catalytic residue. H61 lines the heme o pocket. The Cytoplasmic segment spans residues 78-92; that stretch reads WSWRRLKHMPETRFL. Residues 93–113 traverse the membrane as a helical segment; that stretch reads AVISVFMIIFQGLLGAGAVVF. The Extracellular segment spans residues 114-117; that stretch reads GQSD. The helical transmembrane segment at 118 to 138 threads the bilayer; sequence LIMALHFGFSALSFASVVLLT. Residue H123 participates in heme o binding. Topologically, residues 139-159 are cytoplasmic; it reads RLAFEDSNPQKQYAPIVSKAY. The chain crosses the membrane as a helical span at residues 160–180; it reads KGYVIFVAIYSYVAIYTGAYV. Residues 181 to 215 lie on the Extracellular side of the membrane; that stretch reads KHTNATLACSGFPLCNGQWVPDVFTEAIGVQLLHR. C189 and C195 form a disulfide bridge. H214 is a binding site for heme b. Residues 216–236 form a helical membrane-spanning segment; that stretch reads SAAILLSLLLLVLFIWTVKTF. Over 237–240 the chain is Cytoplasmic; sequence RASR. Residues 241–261 traverse the membrane as a helical segment; the sequence is VLVVCASLAMLLVIGQAASGV. Over 262–274 the chain is Extracellular; that stretch reads AVVLTYNATLTLG. A helical transmembrane segment spans residues 275-295; the sequence is IFHALLISLLFTLLCYMVMLV. H277 provides a ligand contact to heme b. The Cytoplasmic portion of the chain corresponds to 296–301; the sequence is TRHKAK.

Belongs to the COX15/CtaA family. Type 1 subfamily. In terms of assembly, interacts with CtaB. Heme b is required as a cofactor.

It localises to the cell membrane. The catalysed reaction is Fe(II)-heme o + 2 A + H2O = Fe(II)-heme a + 2 AH2. It functions in the pathway porphyrin-containing compound metabolism; heme A biosynthesis; heme A from heme O: step 1/1. In terms of biological role, catalyzes the conversion of heme O to heme A by two successive hydroxylations of the methyl group at C8. The first hydroxylation forms heme I, the second hydroxylation results in an unstable dihydroxymethyl group, which spontaneously dehydrates, resulting in the formyl group of heme A. The polypeptide is Heme A synthase (Shouchella clausii (strain KSM-K16) (Alkalihalobacillus clausii)).